Reading from the N-terminus, the 719-residue chain is High-osmolarity-induced transcription protein 1 (719 aa).

The span at 68–88 shows a compositional bias: polar residues; it reads HISPTTGSESASGSNASTLRN. Disordered regions lie at residues 68–90, 102–159, 353–402, and 496–610; these read HISPTTGSESASGSNASTLRNDG, AAIS…NEIS, THQQ…ASAA, and TTSE…TKPN. Over residues 117–127 the composition is skewed to basic and acidic residues; that stretch reads IGEKLSNEERV. A compositionally biased stretch (low complexity) spans 128–143; it reads NSNVSASNSTTAGTGR. Composition is skewed to polar residues over residues 144–159, 353–369, 387–398, and 496–522; these read MLSQSLTNDSPSNEIS, THQQVNRSPISFPNAST, TQSNNNASTNDH, and TTSELLPSGKSGVNTNIVNRNRASTLP. Serine 146 and serine 153 each carry phosphoserine. Positions 535-572 are enriched in acidic residues; the sequence is DDDGYQEDDDDDGDDEGDGRDNEEDSTAEEDEVDDEIE. Residues 581-601 are compositionally biased toward basic residues; sequence NKRRRSLHHKKSNSLNGRRKL.

This sequence belongs to the HOT1 family. Interacts with HOG1. In terms of processing, hyperphosphorylated during acute stress.

It localises to the nucleus. Functionally, required for a complete transcriptional response to osmotic stress, through recruitment of HOG1 followed by pol II recruitment to the promoters of GPD1 and other HOG-dependent genes. In Saccharomyces cerevisiae (strain ATCC 204508 / S288c) (Baker's yeast), this protein is High-osmolarity-induced transcription protein 1 (HOT1).